We begin with the raw amino-acid sequence, 138 residues long: Small ribosomal subunit protein uS11 (138 aa).

2 disordered regions span residues 1-29 (MPPKKASGTGPKKGQKTRRREKKNVPHGA) and 117-138 (GAISDVTPQPHNGVRPPKRRRV). A compositionally biased stretch (basic residues) spans 13–22 (KGQKTRRREK).

It belongs to the universal ribosomal protein uS11 family. In terms of assembly, part of the 30S ribosomal subunit. Interacts with proteins S7 and S18. Binds to IF-3.

Its function is as follows. Located on the platform of the 30S subunit, it bridges several disparate RNA helices of the 16S rRNA. Forms part of the Shine-Dalgarno cleft in the 70S ribosome. The protein is Small ribosomal subunit protein uS11 of Mycobacterium ulcerans (strain Agy99).